The chain runs to 275 residues: Release factor glutamine methyltransferase (275 aa).

Residues glycine 114 to glycine 118, aspartate 137, tryptophan 165, and asparagine 180 each bind S-adenosyl-L-methionine. Residue asparagine 180–tyrosine 183 participates in substrate binding.

This sequence belongs to the protein N5-glutamine methyltransferase family. PrmC subfamily.

It catalyses the reaction L-glutaminyl-[peptide chain release factor] + S-adenosyl-L-methionine = N(5)-methyl-L-glutaminyl-[peptide chain release factor] + S-adenosyl-L-homocysteine + H(+). Functionally, methylates the class 1 translation termination release factors RF1/PrfA and RF2/PrfB on the glutamine residue of the universally conserved GGQ motif. This Xylella fastidiosa (strain 9a5c) protein is Release factor glutamine methyltransferase.